Here is an 863-residue protein sequence, read N- to C-terminus: Bifunctional uridylyltransferase/uridylyl-removing enzyme (863 aa).

The uridylyltransferase stretch occupies residues 1-328 (MLFPLSLSSP…SSNQATVIEQ (328 aa)). Positions 329–687 (LDDDFQLINQ…ISNRFSLGGT (359 aa)) are uridylyl-removing. The region spanning 446–568 (VDEHTLRVML…VQNQVRLDYL (123 aa)) is the HD domain. ACT domains follow at residues 688 to 772 (EVFI…PNRQ) and 794 to 863 (EMEL…RNIG).

This sequence belongs to the GlnD family. Mg(2+) serves as cofactor.

The enzyme catalyses [protein-PII]-L-tyrosine + UTP = [protein-PII]-uridylyl-L-tyrosine + diphosphate. The catalysed reaction is [protein-PII]-uridylyl-L-tyrosine + H2O = [protein-PII]-L-tyrosine + UMP + H(+). Its activity is regulated as follows. Uridylyltransferase (UTase) activity is inhibited by glutamine, while glutamine activates uridylyl-removing (UR) activity. In terms of biological role, modifies, by uridylylation and deuridylylation, the PII regulatory proteins (GlnB and homologs), in response to the nitrogen status of the cell that GlnD senses through the glutamine level. Under low glutamine levels, catalyzes the conversion of the PII proteins and UTP to PII-UMP and PPi, while under higher glutamine levels, GlnD hydrolyzes PII-UMP to PII and UMP (deuridylylation). Thus, controls uridylylation state and activity of the PII proteins, and plays an important role in the regulation of nitrogen assimilation and metabolism. The polypeptide is Bifunctional uridylyltransferase/uridylyl-removing enzyme (Haemophilus influenzae (strain PittEE)).